A 533-amino-acid polypeptide reads, in one-letter code: Intestinal-type alkaline phosphatase (533 aa).

Residues 1–19 (MQGACVLLLLGLHLQLSLG) form the signal peptide. Mg(2+) is bound at residue Asp-61. Zn(2+) is bound by residues Asp-61 and Ser-111. The Phosphoserine intermediate role is filled by Ser-111. Cys-140 and Cys-202 are joined by a disulfide. Ser-174 serves as a coordination point for Mg(2+). Glu-235 is a Ca(2+) binding site. N-linked (GlcNAc...) asparagine glycosylation is present at Asn-268. Residues Phe-288, Glu-289, and Asp-304 each coordinate Ca(2+). Glu-330 serves as a coordination point for Mg(2+). Positions 335, 339, 376, and 377 each coordinate Zn(2+). Asn-429 carries an N-linked (GlcNAc...) asparagine glycan. His-451 serves as a coordination point for Zn(2+). Cys-486 and Cys-493 are oxidised to a cystine. Asp-506 carries GPI-anchor amidated aspartate lipidation. Residues 507–533 (AAHLAASPPPLALLAGAMLLLLAPTLY) constitute a propeptide, removed in mature form.

It belongs to the alkaline phosphatase family. Homodimer. It depends on Mg(2+) as a cofactor. The cofactor is Zn(2+). Requires Ca(2+) as cofactor.

The protein resides in the cell membrane. It catalyses the reaction a phosphate monoester + H2O = an alcohol + phosphate. In terms of biological role, alkaline phosphatase that can hydrolyze various phosphate compounds. The sequence is that of Intestinal-type alkaline phosphatase (ALPI) from Bos taurus (Bovine).